The following is an 83-amino-acid chain: UPF0512 protein W (83 aa).

Belongs to the UPF0512 family.

The sequence is that of UPF0512 protein W from Dictyostelium discoideum (Social amoeba).